We begin with the raw amino-acid sequence, 238 residues long: Orotidine 5'-phosphate decarboxylase (238 aa).

Substrate contacts are provided by residues D10, K32, 59-68 (DLKLHDIPNT), T122, R184, Q193, G213, and R214. K61 functions as the Proton donor in the catalytic mechanism.

It belongs to the OMP decarboxylase family. Type 1 subfamily. As to quaternary structure, homodimer.

The enzyme catalyses orotidine 5'-phosphate + H(+) = UMP + CO2. The protein operates within pyrimidine metabolism; UMP biosynthesis via de novo pathway; UMP from orotate: step 2/2. Its function is as follows. Catalyzes the decarboxylation of orotidine 5'-monophosphate (OMP) to uridine 5'-monophosphate (UMP). The polypeptide is Orotidine 5'-phosphate decarboxylase (Bacillus mycoides (strain KBAB4) (Bacillus weihenstephanensis)).